The chain runs to 2752 residues: Protein PFF0380w (2752 aa).

The span at 20–30 shows a compositional bias: basic and acidic residues; sequence EREKEEEEKKR. Disordered stretches follow at residues 20 to 44, 139 to 160, 634 to 678, 1048 to 1130, and 1153 to 1172; these read EREK…NNYN, HIHK…NNDY, NDIV…INMK, DKKS…SGEN, and ENLQ…NNNG. A compositionally biased stretch (low complexity) spans 32-44; sequence YNISNNNNNNNYN. The span at 142-157 shows a compositional bias: basic and acidic residues; that stretch reads KNNDINNIHEKNDKSN. Residues 640 to 674 are compositionally biased toward low complexity; it reads NNNNNNNNNNNNNNNNNNNNNNNNNNNNNNNNNNN. Residues 1048–1060 are compositionally biased toward basic and acidic residues; the sequence is DKKSEDMKEDTPT. The segment covering 1061 to 1075 has biased composition (polar residues); it reads RGENLQRGQNLQRGD. The segment covering 1076 to 1090 has biased composition (basic and acidic residues); that stretch reads NLQRGDNLQRGDNLQ. Residues 1091–1130 show a composition bias toward polar residues; sequence RGDNLQNGDNLQNGDNLQRGDNLQNGENLQSGENLQSGEN. Low complexity predominate over residues 1162 to 1172; it reads NNILYPYNNNG. The HTH OST-type domain maps to 1277–1354; sequence TLEEVLEIIS…LHRTHIQHKK (78 aa). Disordered regions lie at residues 1457–1499, 1958–1999, 2063–2099, and 2501–2537; these read DIKQ…NNIS, AKNS…YYML, KRKN…NNDK, and DENN…FLHN. 2 stretches are compositionally biased toward low complexity: residues 1469–1499 and 1962–1975; these read NNIN…NNIS and NQEN…NYNN. Over residues 1976–1994 the composition is skewed to acidic residues; it reads NDDDDDNNNNNNDDDDDDN. 2 stretches are compositionally biased toward low complexity: residues 2068 to 2095 and 2501 to 2526; these read NIHN…NNDN and DENN…VLHN.

The polypeptide is Protein PFF0380w (Plasmodium falciparum (isolate 3D7)).